A 563-amino-acid polypeptide reads, in one-letter code: UvrABC system protein C (563 aa).

Residues 12–87 enclose the GIY-YIG domain; that stretch reads NKSGVYIFKK…IYKYKPKYNA (76 aa). The 36-residue stretch at 194-229 folds into the UVR domain; it reads SNVISFIKLKMEQHARLLDFENAAKYRDILLNFNKV.

It belongs to the UvrC family. As to quaternary structure, interacts with UvrB in an incision complex.

It is found in the cytoplasm. The UvrABC repair system catalyzes the recognition and processing of DNA lesions. UvrC both incises the 5' and 3' sides of the lesion. The N-terminal half is responsible for the 3' incision and the C-terminal half is responsible for the 5' incision. The sequence is that of UvrABC system protein C from Fervidobacterium nodosum (strain ATCC 35602 / DSM 5306 / Rt17-B1).